The following is a 125-amino-acid chain: Phosphoribosyl-AMP cyclohydrolase (125 aa).

Aspartate 74 serves as a coordination point for Mg(2+). Cysteine 75 provides a ligand contact to Zn(2+). Residues aspartate 76 and aspartate 78 each coordinate Mg(2+). Zn(2+) is bound by residues cysteine 92 and cysteine 99.

This sequence belongs to the PRA-CH family. As to quaternary structure, homodimer. It depends on Mg(2+) as a cofactor. The cofactor is Zn(2+).

Its subcellular location is the cytoplasm. It carries out the reaction 1-(5-phospho-beta-D-ribosyl)-5'-AMP + H2O = 1-(5-phospho-beta-D-ribosyl)-5-[(5-phospho-beta-D-ribosylamino)methylideneamino]imidazole-4-carboxamide. It functions in the pathway amino-acid biosynthesis; L-histidine biosynthesis; L-histidine from 5-phospho-alpha-D-ribose 1-diphosphate: step 3/9. Its function is as follows. Catalyzes the hydrolysis of the adenine ring of phosphoribosyl-AMP. The sequence is that of Phosphoribosyl-AMP cyclohydrolase from Trichlorobacter lovleyi (strain ATCC BAA-1151 / DSM 17278 / SZ) (Geobacter lovleyi).